Here is a 240-residue protein sequence, read N- to C-terminus: MTKRYWNINLEEMMEAGVHFGHQARKWNPRMAPYIFTERRGIHIINLTRTARFLSEACDLVFDAAGKGKQFPIVGTKYQAADSVASAAIKARCHYVNKKWLGGMLTNWSTTGTRPRKFKDLKKEQDTGQSNRLPKKEAAMLKRQLAQLQKYLGGIKYMTSLPDIVIIADQQEESTAIGECITLGIPTICLVDTDCDPDLTDIPIPANDDARASIRLILNKLTSSICEGHYSSMKGESMKS.

The protein belongs to the universal ribosomal protein uS2 family.

It is found in the plastid. The protein localises to the chloroplast. The protein is Small ribosomal subunit protein uS2c (rps2) of Cycas taitungensis (Prince sago).